The chain runs to 212 residues: Putative aryl-alcohol dehydrogenase AAD6 (212 aa).

Tyr-76 serves as the catalytic Proton donor.

It belongs to the aldo/keto reductase family. Aldo/keto reductase 2 subfamily.

The polypeptide is Putative aryl-alcohol dehydrogenase AAD6 (Saccharomyces cerevisiae (strain ATCC 204508 / S288c) (Baker's yeast)).